Consider the following 531-residue polypeptide: Chaperonin GroEL, chloroplastic (531 aa).

ATP-binding positions include 30–33, 87–91, glycine 415, 481–483, and aspartate 497; these read TLGP, DGTTT, and NAA.

Belongs to the chaperonin (HSP60) family. In terms of assembly, forms a cylinder of 14 subunits composed of two heptameric rings stacked back-to-back. Interacts with the co-chaperonin GroES.

The protein localises to the plastid. It is found in the chloroplast. It catalyses the reaction ATP + H2O + a folded polypeptide = ADP + phosphate + an unfolded polypeptide.. Its function is as follows. Together with its co-chaperonin GroES, plays an essential role in assisting protein folding. The GroEL-GroES system forms a nano-cage that allows encapsulation of the non-native substrate proteins and provides a physical environment optimized to promote and accelerate protein folding. The chain is Chaperonin GroEL, chloroplastic from Emiliania huxleyi (Coccolithophore).